The chain runs to 247 residues: Dihydroorotate dehydrogenase B (NAD(+)), electron transfer subunit (247 aa).

Positions 2 to 96 (RWKMKARVLS…TGPHGNGFEI (95 aa)) constitute an FAD-binding FR-type domain. Residues 49-52 (RPFS), 64-66 (LYQ), and 71-72 (GT) contribute to the FAD site. Residues Cys210, Cys215, Cys218, and Cys234 each coordinate [2Fe-2S] cluster.

Belongs to the PyrK family. In terms of assembly, heterotetramer of 2 PyrK and 2 PyrD type B subunits. Requires [2Fe-2S] cluster as cofactor. The cofactor is FAD.

It participates in pyrimidine metabolism; UMP biosynthesis via de novo pathway; orotate from (S)-dihydroorotate (NAD(+) route): step 1/1. In terms of biological role, responsible for channeling the electrons from the oxidation of dihydroorotate from the FMN redox center in the PyrD type B subunit to the ultimate electron acceptor NAD(+). This chain is Dihydroorotate dehydrogenase B (NAD(+)), electron transfer subunit, found in Caldanaerobacter subterraneus subsp. tengcongensis (strain DSM 15242 / JCM 11007 / NBRC 100824 / MB4) (Thermoanaerobacter tengcongensis).